The sequence spans 122 residues: UPF0102 protein BARBAKC583_1042 (122 aa).

The protein belongs to the UPF0102 family.

This is UPF0102 protein BARBAKC583_1042 from Bartonella bacilliformis (strain ATCC 35685 / KC583 / Herrer 020/F12,63).